A 643-amino-acid polypeptide reads, in one-letter code: Replication protein E1 (643 aa).

The segment at Thr28 to Gly60 is disordered. Acidic residues predominate over residues Ser36–Thr45. The Nuclear localization signal signature appears at Lys84–Lys86. Ser90 and Ser103 each carry phosphoserine; by host. The short motif at Leu102–Leu111 is the Nuclear export signal element. The interval Lys119 to Gln179 is disordered. A compositionally biased stretch (basic and acidic residues) spans Val157–Gly167. The tract at residues Ser180–Asp346 is DNA-binding region. The SF3 helicase domain occupies Val445–Leu595. Gly471–Ser478 provides a ligand contact to ATP. Residue Lys552 forms a Glycyl lysine isopeptide (Lys-Gly) (interchain with G-Cter in SUMO) linkage.

It belongs to the papillomaviridae E1 protein family. As to quaternary structure, can form hexamers. Interacts with E2 protein; this interaction increases E1 DNA binding specificity. Interacts with host DNA polymerase subunit POLA2. Interacts with host single stranded DNA-binding protein RPA1. Interacts with host TOP1; this interaction stimulates the enzymatic activity of TOP1. Post-translationally, phosphorylated. In terms of processing, sumoylated.

The protein resides in the host nucleus. The catalysed reaction is Couples ATP hydrolysis with the unwinding of duplex DNA by translocating in the 3'-5' direction.. The enzyme catalyses ATP + H2O = ADP + phosphate + H(+). ATP-dependent DNA 3'-5' helicase required for initiation of viral DNA replication. It forms a complex with the viral E2 protein. The E1-E2 complex binds to the replication origin which contains binding sites for both proteins. During the initial step, a dimer of E1 interacts with a dimer of protein E2 leading to a complex that binds the viral origin of replication with high specificity. Then, a second dimer of E1 displaces the E2 dimer in an ATP-dependent manner to form the E1 tetramer. Following this, two E1 monomers are added to each half of the site, which results in the formation of two E1 trimers on the viral ori. Subsequently, two hexamers will be created. The double hexamer acts as a bi-directional helicase machinery and unwinds the viral DNA and then recruits the host DNA polymerase to start replication. The protein is Replication protein E1 of Human papillomavirus 57.